The chain runs to 515 residues: Zinc metalloproteinase-disintegrin BA-5A (515 aa).

Residues 1–20 form the signal peptide; it reads MMQVLLVTICLAVFPYQGSS. Positions 21 to 193 are excised as a propeptide; it reads IILESGNVND…KEASQLVATS (173 aa). In terms of domain architecture, Peptidase M12B spans 203–399; sequence RYIKYFIVVD…YKPDCTLIRP (197 aa). Asparagine 263 is a glycosylation site (N-linked (GlcNAc...) asparagine). Disulfide bonds link cysteine 314–cysteine 394, cysteine 354–cysteine 378, cysteine 356–cysteine 361, cysteine 410–cysteine 429, cysteine 421–cysteine 439, cysteine 423–cysteine 434, cysteine 433–cysteine 456, cysteine 447–cysteine 453, cysteine 452–cysteine 478, cysteine 465–cysteine 485, and cysteine 472–cysteine 497. Histidine 339 contributes to the Zn(2+) binding site. Glutamate 340 is a catalytic residue. Zn(2+) contacts are provided by histidine 343 and histidine 349. N-linked (GlcNAc...) asparagine glycosylation occurs at asparagine 377. In terms of domain architecture, Disintegrin spans 407–493; sequence PPVCGNDILE…DCPIDHFHRN (87 aa). Positions 471–473 match the D/ECD-tripeptide motif; that stretch reads ECD.

Belongs to the venom metalloproteinase (M12B) family. P-II subfamily. In terms of assembly, monomer. Zn(2+) is required as a cofactor. Expressed by the venom gland.

It localises to the secreted. In terms of biological role, snake venom zinc metalloprotease that possesses hemorrhagic activity and degrades alpha chain of fibrinogen (FGA). May inhibit alpha-2/beta-1 integrin (ITGA2/ITGB1). In Bitis arietans (African puff adder), this protein is Zinc metalloproteinase-disintegrin BA-5A.